The primary structure comprises 322 residues: GATA transcription factor 8 (322 aa).

Residues 93-168 form a disordered region; that stretch reads TLVEKKEDSF…DKDRVKDNVC (76 aa). Residues 102 to 141 show a composition bias toward low complexity; it reads FSTNTDSSSSHSQFRSSSPVSVLESSSSSSQTTNTTSLVL. The span at 144-154 shows a compositional bias: basic residues; sequence KHGRPRTKRPR. The short motif at 147-154 is the Nuclear localization signal element; that stretch reads RPRTKRPR. The GATA-type zinc-finger motif lies at 225 to 279; it reads QYPLRKCMHCEVTKTPQWRLGPMGPKTLCNACGVRYKSGRLFPEYRPAASPTFTP.

This sequence belongs to the type IV zinc-finger family. Class A subfamily.

It is found in the nucleus. In terms of biological role, transcriptional activator that specifically binds 5'-GATA-3' or 5'-GAT-3' motifs within gene promoters. May be involved in the regulation of some light-responsive genes. In Arabidopsis thaliana (Mouse-ear cress), this protein is GATA transcription factor 8 (GATA8).